The primary structure comprises 400 residues: S-adenosylmethionine synthase (400 aa).

His-17 contributes to the ATP binding site. Asp-19 contributes to the Mg(2+) binding site. Position 45 (Glu-45) interacts with K(+). The L-methionine site is built by Glu-58 and Gln-101. A flexible loop region spans residues 101-111 (QSPDIAMGVDQ). ATP-binding positions include 177-179 (DGK), 244-245 (RF), Asp-253, 259-260 (RK), Ala-276, and Lys-280. An L-methionine-binding site is contributed by Asp-253. Lys-284 provides a ligand contact to L-methionine.

Belongs to the AdoMet synthase family. In terms of assembly, homotetramer; dimer of dimers. Mg(2+) serves as cofactor. It depends on K(+) as a cofactor.

Its subcellular location is the cytoplasm. It carries out the reaction L-methionine + ATP + H2O = S-adenosyl-L-methionine + phosphate + diphosphate. It functions in the pathway amino-acid biosynthesis; S-adenosyl-L-methionine biosynthesis; S-adenosyl-L-methionine from L-methionine: step 1/1. Catalyzes the formation of S-adenosylmethionine (AdoMet) from methionine and ATP. The overall synthetic reaction is composed of two sequential steps, AdoMet formation and the subsequent tripolyphosphate hydrolysis which occurs prior to release of AdoMet from the enzyme. The sequence is that of S-adenosylmethionine synthase from Bacillus licheniformis (strain ATCC 14580 / DSM 13 / JCM 2505 / CCUG 7422 / NBRC 12200 / NCIMB 9375 / NCTC 10341 / NRRL NRS-1264 / Gibson 46).